The following is a 489-amino-acid chain: Cytochrome P450 monooxygenase bfoB (489 aa).

Residues 1-18 (MLALYLIAGLLVGLLVYR) form the signal peptide. Residues asparagine 113, asparagine 348, and asparagine 386 are each glycosylated (N-linked (GlcNAc...) asparagine). Cysteine 429 contacts heme.

It belongs to the cytochrome P450 family. The cofactor is heme.

It carries out the reaction 2 fonsecin B + NADPH + O2 + H(+) = bifonsecin B + NADP(+) + 2 H2O. The enzyme catalyses 2 rubrofusarin B + NADPH + O2 + 3 H(+) = nigerone + NADP(+) + 2 H2O. It functions in the pathway secondary metabolite biosynthesis. Its function is as follows. Cytochrome P450 monooxygenase; part of the gene cluster that mediates the biosynthesis of bifonsecin B, a dimeric gamma-naphthopyrone. The first step in the biosynthesis of bifonsecin B is the production of gamma-naphthopyrone precursor YWA1 by the non-reducing polyketide synthase albA, via condensation of one acetyl-CoA starter unit with 6 malonyl-CoA units. YWA1 is then methylated by bfoE at position C-6 to yield foncesin which is further methylated at position C-8 by bfoD to produce fonsecin B. A key enzyme in the biosynthetic pathway is the cytochrome P450 monooxygenase bfoB which catalyzes the oxidative dimerization of fonsecin B to bifonsecin B. Bfob also catalyzes the oxidative dimerization of rubrofusarin B into nigerone. The stereoselectivity of bfoB is influenced by the two natural monomeric substrates; homodimerization of fonsecin B yields a stereochemically pure biaryl, M-foncerine B, while rubrofusarin B yields a mixture of enantiomers M- and P-nigerone. The protein is Cytochrome P450 monooxygenase bfoB of Aspergillus brasiliensis (strain CBS 101740 / IMI 381727 / IBT 21946).